Here is a 191-residue protein sequence, read N- to C-terminus: Holliday junction branch migration complex subunit RuvA (191 aa).

Positions 1–64 (MIGRLSGVLL…EDAHILFGFG (64 aa)) are domain I. The interval 65-137 (TNEERNVFKQ…LKGKLGADLG (73 aa)) is domain II. Residues 137–141 (GVAGA) are flexible linker. The interval 142 to 191 (VATDATSDILNALLALGYSDKEAMLALKQVPAGTGVSDGIKLALKSLSKA) is domain III.

The protein belongs to the RuvA family. In terms of assembly, homotetramer. Forms an RuvA(8)-RuvB(12)-Holliday junction (HJ) complex. HJ DNA is sandwiched between 2 RuvA tetramers; dsDNA enters through RuvA and exits via RuvB. An RuvB hexamer assembles on each DNA strand where it exits the tetramer. Each RuvB hexamer is contacted by two RuvA subunits (via domain III) on 2 adjacent RuvB subunits; this complex drives branch migration. In the full resolvosome a probable DNA-RuvA(4)-RuvB(12)-RuvC(2) complex forms which resolves the HJ.

The protein localises to the cytoplasm. Its function is as follows. The RuvA-RuvB-RuvC complex processes Holliday junction (HJ) DNA during genetic recombination and DNA repair, while the RuvA-RuvB complex plays an important role in the rescue of blocked DNA replication forks via replication fork reversal (RFR). RuvA specifically binds to HJ cruciform DNA, conferring on it an open structure. The RuvB hexamer acts as an ATP-dependent pump, pulling dsDNA into and through the RuvAB complex. HJ branch migration allows RuvC to scan DNA until it finds its consensus sequence, where it cleaves and resolves the cruciform DNA. This chain is Holliday junction branch migration complex subunit RuvA, found in Janthinobacterium sp. (strain Marseille) (Minibacterium massiliensis).